Reading from the N-terminus, the 412-residue chain is Yellow-related salivary protein LJM17 (412 aa).

The first 18 residues, 1-18 (MRFFFVFLAIVLFQGIHG), serve as a signal peptide directing secretion. Asn-29 carries an N-linked (GlcNAc...) asparagine glycan.

It belongs to the major royal jelly protein family. Salivary gland.

It localises to the secreted. Probably modulates blood feeding of sand flies on vertebrate species by binding and sequestering different mediators involved in the host response. Binds biogenic amines. Binds serotonin with high affinity. Binds noradrenaline but not adrenaline. Binds dopamine and octopamine. Binds histamine. Inhibits host smooth muscle contraction induced by histamine in bioassay with guinea pig ileum. Immunogenic; elicits antibody production in the host. Functions as a chemoattractant for host neutrophils; likely acts through a G-protein-coupled receptor and effect is dependent on calcium influx. This chain is Yellow-related salivary protein LJM17, found in Lutzomyia longipalpis (Sand fly).